The primary structure comprises 475 residues: Na(+)/H(+) antiporter NhaA 2 (475 aa).

The next 12 helical transmembrane spans lie at 44 to 64 (AQAT…WWAN), 92 to 112 (LKHI…GLEI), 130 to 150 (LILC…LFNW), 156 to 176 (IGWG…LTLV), 186 to 206 (AFLV…IALF), 211 to 231 (ISVI…IANY), 232 to 252 (AGVL…WTML), 255 to 275 (GVHP…RPML), 331 to 351 (ALDL…NAGV), 368 to 388 (LGIV…ACWL), 406 to 426 (VIGM…IATL), and 442 to 462 (ILFA…IIAA).

Belongs to the NhaA Na(+)/H(+) (TC 2.A.33) antiporter family.

The protein localises to the cell inner membrane. It catalyses the reaction Na(+)(in) + 2 H(+)(out) = Na(+)(out) + 2 H(+)(in). Its function is as follows. Na(+)/H(+) antiporter that extrudes sodium in exchange for external protons. This is Na(+)/H(+) antiporter NhaA 2 from Psychromonas ingrahamii (strain DSM 17664 / CCUG 51855 / 37).